Reading from the N-terminus, the 603-residue chain is Laccase 1 (603 aa).

An N-terminal signal peptide occupies residues 1–20 (MSRFARLLLIVALFFTNAWA). 2 Plastocyanin-like domains span residues 66–108 (QRPI…IHIR) and 159–349 (LVVS…MRIP). Residues H90 and H92 each coordinate Cu cation. 4 N-linked (GlcNAc...) asparagine glycosylation sites follow: N246, N269, N434, and N474. Positions 460 to 588 (TRDTENDGLV…GGMGIAILDG (129 aa)) constitute a Plastocyanin-like 3 domain. Cu cation-binding residues include H496, H499, and H501. Residue N516 is glycosylated (N-linked (GlcNAc...) asparagine). Cu cation contacts are provided by H570, C571, H572, and H576.

Belongs to the multicopper oxidase family. Cu cation is required as a cofactor.

The protein localises to the cell surface. Its pathway is pigment biosynthesis. In terms of biological role, laccase; part of the Pks1 gene cluster that mediates the biosynthesis of an anthraquinone derivative pigment that contributes to conidial pigmentation that provides protection from UV radiation, heat and cold stress. The polyketide synthase Pks1 produces 1-acetyl-2,4,6,8-tetrahydroxy-9,10-anthraquinone though condensation of acetyl-CoA with malonyl-CoA. The dehydratase EthD and the laccase Mlac1 further convert the anthraquinone derivative into the final conidial pigment. In Metarhizium anisopliae (Entomophthora anisopliae), this protein is Laccase 1.